Here is a 256-residue protein sequence, read N- to C-terminus: 6-phosphogluconolactonase (256 aa).

The protein belongs to the glucosamine/galactosamine-6-phosphate isomerase family. 6-phosphogluconolactonase subfamily.

The catalysed reaction is 6-phospho-D-glucono-1,5-lactone + H2O = 6-phospho-D-gluconate + H(+). The protein operates within carbohydrate degradation; pentose phosphate pathway; D-ribulose 5-phosphate from D-glucose 6-phosphate (oxidative stage): step 2/3. Hydrolysis of 6-phosphogluconolactone to 6-phosphogluconate. The polypeptide is 6-phosphogluconolactonase (pgl) (Chlamydia trachomatis serovar D (strain ATCC VR-885 / DSM 19411 / UW-3/Cx)).